The following is a 123-amino-acid chain: Large ribosomal subunit protein bL12 (123 aa).

Belongs to the bacterial ribosomal protein bL12 family. As to quaternary structure, homodimer. Part of the ribosomal stalk of the 50S ribosomal subunit. Forms a multimeric L10(L12)X complex, where L10 forms an elongated spine to which 2 to 4 L12 dimers bind in a sequential fashion. Binds GTP-bound translation factors.

Its function is as follows. Forms part of the ribosomal stalk which helps the ribosome interact with GTP-bound translation factors. Is thus essential for accurate translation. The sequence is that of Large ribosomal subunit protein bL12 from Shewanella sp. (strain ANA-3).